The sequence spans 327 residues: Sideroflexin FSF1 (327 aa).

Alanine 2 is subject to N-acetylalanine. 4 helical membrane passes run asparagine 98–tryptophan 118, serine 143–leucine 163, leucine 179–phenylalanine 199, and alanine 272–phenylalanine 292.

This sequence belongs to the sideroflexin family.

The protein resides in the mitochondrion membrane. In terms of biological role, mitochondrial amino-acid transporter that mediates transport of serine into mitochondria. The polypeptide is Sideroflexin FSF1 (Saccharomyces cerevisiae (strain ATCC 204508 / S288c) (Baker's yeast)).